Reading from the N-terminus, the 173-residue chain is Translation initiation factor IF-3 (173 aa).

The protein belongs to the IF-3 family. As to quaternary structure, monomer.

It is found in the cytoplasm. Its function is as follows. IF-3 binds to the 30S ribosomal subunit and shifts the equilibrium between 70S ribosomes and their 50S and 30S subunits in favor of the free subunits, thus enhancing the availability of 30S subunits on which protein synthesis initiation begins. In Bacillus subtilis (strain 168), this protein is Translation initiation factor IF-3.